The sequence spans 447 residues: Drebrin-like protein A (447 aa).

Positions 2–133 constitute an ADF-H domain; that stretch reads SVNLSKNGAA…EPESIMEKVA (132 aa). Disordered stretches follow at residues 141–160 and 184–368; these read NFHK…VGSV and KDEE…TENQ. The stretch at 180-245 forms a coiled coil; it reads AKAEKDEEER…EQEETEKQQT (66 aa). Basic and acidic residues predominate over residues 184 to 242; it reads KDEEERRMEENRRANSEKDRLERERKEREQREAETREQRFRERAKEIDAQRKEQEETEK. Over residues 246 to 255 the composition is skewed to polar residues; that stretch reads VPASQRSVNP. Pro residues predominate over residues 319–328; it reads PESPVPPVSH. Residues 345 to 365 are compositionally biased toward acidic residues; it reads QEEENIYQDATEDQNIYEDTT. Positions 388–447 constitute an SH3 domain; sequence EKGVCARALYDYQAADDTEISFDPDDLITQIQFIDEGWWRGFSPAGHFGMFPANYVELLE.

It belongs to the ABP1 family.

The protein localises to the cytoplasm. The protein resides in the cytoskeleton. It localises to the cell projection. It is found in the lamellipodium. Its subcellular location is the ruffle. The protein localises to the cell cortex. The protein resides in the cytosol. It localises to the synapse. It is found in the perikaryon. Its subcellular location is the neuron projection. The protein localises to the cell membrane. The protein resides in the cytoplasmic vesicle. It localises to the clathrin-coated vesicle membrane. It is found in the golgi apparatus membrane. Its subcellular location is the podosome. The protein localises to the early endosome. The protein resides in the dendrite. It localises to the postsynaptic density. Adapter protein that binds F-actin and dynamin, and thereby plays a role in receptor-mediated endocytosis. Plays a role in the reorganization of the actin cytoskeleton, formation of cell projections, such as neurites, in neuron morphogenesis and synapse formation. Does not bind G-actin and promote actin polymerization by itself, but excerts its functions by interaction with other proteins. Required for the formation of organized podosome rosettes. This chain is Drebrin-like protein A (dbnl-a), found in Xenopus laevis (African clawed frog).